The chain runs to 236 residues: CD81 antigen (236 aa).

Residues 1–12 lie on the Cytoplasmic side of the membrane; sequence MGVEGCTKCIKY. Residues 13 to 33 form a helical membrane-spanning segment; it reads LLFVFNFVFWLAGGVILGVAL. Topologically, residues 34–63 are extracellular; sequence WLRHDPQTTTLLYLELGDKPAPSTFYVGIY. The helical transmembrane segment at 64–84 threads the bilayer; that stretch reads ILIAVGAVMMFVGFLGCYGAI. Residues 85-89 are Cytoplasmic-facing; that stretch reads QESQC. The chain crosses the membrane as a helical span at residues 90-112; the sequence is LLGTFFTCLVILFACEVAAGIWG. Residues 113 to 201 are Extracellular-facing; the sequence is FVNKDQIAKD…QKIDELFSGK (89 aa). 2 disulfides stabilise this stretch: Cys-156-Cys-190 and Cys-157-Cys-175. Residues 202 to 224 form a helical membrane-spanning segment; the sequence is LYLIGIAAIVVAVIMIFEMILSM. Glu-219 contributes to the cholesterol binding site. Residues 225-236 are Cytoplasmic-facing; the sequence is VLCCGIRNSSVY.

This sequence belongs to the tetraspanin (TM4SF) family. In terms of assembly, homodimer. Part of a complex composed of CD19, CR2/CD21, CD81 and IFITM1/CD225 in the membrane of mature B cells. Interacts (via the second extracellular domain) with CD19; this interaction is initiated early during biosynthesis in the ER and enables trafficking of only properly folded CD19. Part of a complex that includes MHC class II/HLA-DR molecules and IFITM1. Interacts with IFITM1. Interacts with IFITM2 and IFITM3. Part of integrin-tetraspanin complex composed of CD9, CD81, beta-1 and beta-2 integrins in the membrane of monocyte/macrophages. Interacts (via the second extracellular domain) with integrin ITGAV:ITGB3. Interacts with CD247/CD3 zeta, ICAM1 and CD9 at the immune synapse on T cell membrane. Part of a GPCR-tetraspanin complex consisting at least of ADGRG1, CD81, possibly CD9, and GNA11 in which CD81 enhances the association of ADGRG1 with GNA11. Part of a complex composed of CD9, CD81, PTGFRN and IGSF8. Interacts directly with IGSF8. Interacts with CD53 and SCIMP. Interacts with SAMHD1 (via its C-terminus). Interacts with glypican GPC3 and with the transcriptional repressor HHEX; binding to GPC3 decreases the availability of free CD81 for binding to HHEX, resulting in nuclear translocation of HHEX and transcriptional repression. Interacts with CLDN1. Interacts with CLDN6 and CLDN9. Post-translationally, not glycosylated. In terms of processing, likely constitutively palmitoylated at low levels. Protein palmitoylation is up-regulated upon coligation of BCR and CD9-C2R-CD81 complexes in lipid rafts.

It is found in the cell membrane. It localises to the basolateral cell membrane. Functionally, structural component of specialized membrane microdomains known as tetraspanin-enriched microdomains (TERMs), which act as platforms for receptor clustering and signaling. Essential for trafficking and compartmentalization of CD19 receptor on the surface of activated B cells. Upon initial encounter with microbial pathogens, enables the assembly of CD19-CR2/CD21 and B cell receptor (BCR) complexes at signaling TERMs, lowering the threshold dose of antigen required to trigger B cell clonal expansion and antibody production. In T cells, facilitates the localization of CD247/CD3 zeta at antigen-induced synapses with B cells, providing for costimulation and polarization toward T helper type 2 phenotype. Present in MHC class II compartments, may also play a role in antigen presentation. Can act both as positive and negative regulator of homotypic or heterotypic cell-cell fusion processes. Positively regulates sperm-egg fusion and may be involved in acrosome reaction. In myoblasts, associates with CD9 and PTGFRN and inhibits myotube fusion during muscle regeneration. In macrophages, associates with CD9 and beta-1 and beta-2 integrins, and prevents macrophage fusion into multinucleated giant cells specialized in ingesting complement-opsonized large particles. Also prevents the fusion of mononuclear cell progenitors into osteoclasts in charge of bone resorption. May regulate the compartmentalization of enzymatic activities. In T cells, defines the subcellular localization of dNTPase SAMHD1 and permits its degradation by the proteasome, thereby controlling intracellular dNTP levels. Also involved in cell adhesion and motility. Positively regulates integrin-mediated adhesion of macrophages, particularly relevant for the inflammatory response in the lung. The protein is CD81 antigen (Cd81) of Rattus norvegicus (Rat).